Here is a 48-residue protein sequence, read N- to C-terminus: ATP synthase protein 8 (48 aa).

A helical transmembrane segment spans residues 16-36 (GFLLMTILLVLFSQFFLPMIL).

It belongs to the ATPase protein 8 family. F-type ATPases have 2 components, CF(1) - the catalytic core - and CF(0) - the membrane proton channel.

The protein resides in the mitochondrion membrane. Its function is as follows. Mitochondrial membrane ATP synthase (F(1)F(0) ATP synthase or Complex V) produces ATP from ADP in the presence of a proton gradient across the membrane which is generated by electron transport complexes of the respiratory chain. F-type ATPases consist of two structural domains, F(1) - containing the extramembraneous catalytic core and F(0) - containing the membrane proton channel, linked together by a central stalk and a peripheral stalk. During catalysis, ATP synthesis in the catalytic domain of F(1) is coupled via a rotary mechanism of the central stalk subunits to proton translocation. Part of the complex F(0) domain. Minor subunit located with subunit a in the membrane. This is ATP synthase protein 8 (ATP8) from Vanderwaltozyma polyspora (strain ATCC 22028 / DSM 70294 / BCRC 21397 / CBS 2163 / NBRC 10782 / NRRL Y-8283 / UCD 57-17) (Kluyveromyces polysporus).